The following is a 1774-amino-acid chain: U3 small nucleolar RNA-associated protein 10 (1774 aa).

The segment at 1209–1228 (TEQGKSDGDESGSEPDNDNP) is disordered. One copy of the HEAT repeat lies at 1734–1772 (LVPVIAELLEDDDEEVEQEVRTGLVKVVETVLGEPFDRY).

Belongs to the HEATR1/UTP10 family. As to quaternary structure, component of the ribosomal small subunit (SSU) processome.

The protein localises to the nucleus. It localises to the nucleolus. Involved in nucleolar processing of pre-18S ribosomal RNA. Involved in ribosome biosynthesis. The chain is U3 small nucleolar RNA-associated protein 10 from Eremothecium gossypii (strain ATCC 10895 / CBS 109.51 / FGSC 9923 / NRRL Y-1056) (Yeast).